A 208-amino-acid chain; its full sequence is Uracil phosphoribosyltransferase (208 aa).

5-phospho-alpha-D-ribose 1-diphosphate contacts are provided by residues Arg78, Arg103, and 130–138 (DPMLATGGS). Uracil-binding positions include Ile193 and 198–200 (GDA). Asp199 lines the 5-phospho-alpha-D-ribose 1-diphosphate pocket.

This sequence belongs to the UPRTase family. Mg(2+) is required as a cofactor.

It catalyses the reaction UMP + diphosphate = 5-phospho-alpha-D-ribose 1-diphosphate + uracil. The protein operates within pyrimidine metabolism; UMP biosynthesis via salvage pathway; UMP from uracil: step 1/1. With respect to regulation, allosterically activated by GTP. In terms of biological role, catalyzes the conversion of uracil and 5-phospho-alpha-D-ribose 1-diphosphate (PRPP) to UMP and diphosphate. This is Uracil phosphoribosyltransferase from Wolinella succinogenes (strain ATCC 29543 / DSM 1740 / CCUG 13145 / JCM 31913 / LMG 7466 / NCTC 11488 / FDC 602W) (Vibrio succinogenes).